The chain runs to 330 residues: Tryptophan--tRNA ligase (330 aa).

ATP contacts are provided by residues 10 to 12 (QPS) and 18 to 19 (GN). Residues 11-19 (PSGSVTLGN) carry the 'HIGH' region motif. Residue Asp-133 participates in L-tryptophan binding. Residues 145–147 (GED), Ile-184, and 193–197 (KMSKS) each bind ATP. The 'KMSKS' region signature appears at 193–197 (KMSKS).

It belongs to the class-I aminoacyl-tRNA synthetase family. As to quaternary structure, homodimer.

It is found in the cytoplasm. It catalyses the reaction tRNA(Trp) + L-tryptophan + ATP = L-tryptophyl-tRNA(Trp) + AMP + diphosphate + H(+). Functionally, catalyzes the attachment of tryptophan to tRNA(Trp). In Bacillus subtilis (strain 168), this protein is Tryptophan--tRNA ligase.